The chain runs to 874 residues: Alanine--tRNA ligase (874 aa).

His-559, His-563, Cys-661, and His-665 together coordinate Zn(2+).

This sequence belongs to the class-II aminoacyl-tRNA synthetase family. Requires Zn(2+) as cofactor.

Its subcellular location is the cytoplasm. It carries out the reaction tRNA(Ala) + L-alanine + ATP = L-alanyl-tRNA(Ala) + AMP + diphosphate. In terms of biological role, catalyzes the attachment of alanine to tRNA(Ala) in a two-step reaction: alanine is first activated by ATP to form Ala-AMP and then transferred to the acceptor end of tRNA(Ala). Also edits incorrectly charged Ser-tRNA(Ala) and Gly-tRNA(Ala) via its editing domain. The sequence is that of Alanine--tRNA ligase from Microcystis aeruginosa (strain NIES-843 / IAM M-2473).